We begin with the raw amino-acid sequence, 275 residues long: Urease accessory protein UreD (275 aa).

Belongs to the UreD family. UreD, UreF and UreG form a complex that acts as a GTP-hydrolysis-dependent molecular chaperone, activating the urease apoprotein by helping to assemble the nickel containing metallocenter of UreC. The UreE protein probably delivers the nickel.

Its subcellular location is the cytoplasm. Functionally, required for maturation of urease via the functional incorporation of the urease nickel metallocenter. This Cereibacter sphaeroides (strain ATCC 17025 / ATH 2.4.3) (Rhodobacter sphaeroides) protein is Urease accessory protein UreD.